Consider the following 67-residue polypeptide: MRIHYLLFTLLFLFLVPVPGHGGIINTLQKYYCRVRGGRCAVLSCLPKEEQIGKCSTRGRKCCRRKK.

The signal sequence occupies residues 1–22; it reads MRIHYLLFTLLFLFLVPVPGHG. Disulfide bonds link cysteine 33–cysteine 62, cysteine 40–cysteine 55, and cysteine 45–cysteine 63.

The protein belongs to the beta-defensin family.

The protein resides in the secreted. In terms of biological role, exhibits antimicrobial activity against Gram-positive and Gram-negative bacteria. The sequence is that of Beta-defensin 103A (DEFB103A) from Gorilla gorilla gorilla (Western lowland gorilla).